We begin with the raw amino-acid sequence, 551 residues long: Chaperonin GroEL (551 aa).

ATP is bound by residues 30 to 33 (TLGP), Lys-51, 87 to 91 (DGTTT), Gly-415, 479 to 481 (NAA), and Asp-495.

Belongs to the chaperonin (HSP60) family. As to quaternary structure, forms a cylinder of 14 subunits composed of two heptameric rings stacked back-to-back. Interacts with the co-chaperonin GroES.

The protein localises to the cytoplasm. The catalysed reaction is ATP + H2O + a folded polypeptide = ADP + phosphate + an unfolded polypeptide.. Together with its co-chaperonin GroES, plays an essential role in assisting protein folding. The GroEL-GroES system forms a nano-cage that allows encapsulation of the non-native substrate proteins and provides a physical environment optimized to promote and accelerate protein folding. This chain is Chaperonin GroEL, found in Acidithiobacillus ferrooxidans (strain ATCC 23270 / DSM 14882 / CIP 104768 / NCIMB 8455) (Ferrobacillus ferrooxidans (strain ATCC 23270)).